A 98-amino-acid chain; its full sequence is Integration host factor subunit beta (98 aa).

Belongs to the bacterial histone-like protein family. Heterodimer of an alpha and a beta chain.

In terms of biological role, this protein is one of the two subunits of integration host factor, a specific DNA-binding protein that functions in genetic recombination as well as in transcriptional and translational control. In Pseudomonas fluorescens (strain Pf0-1), this protein is Integration host factor subunit beta.